The sequence spans 533 residues: Beta-1,4 N-acetylgalactosaminyltransferase 1 (533 aa).

The Cytoplasmic portion of the chain corresponds to 1-7 (MRLDRRA). A helical; Signal-anchor for type II membrane protein transmembrane segment spans residues 8–25 (LYALVLLLACASLGLLYS). Over 26–533 (STRNAPSLPN…KHRLQCMTAE (508 aa)) the chain is Lumenal. Asn-79, Asn-179, and Asn-274 each carry an N-linked (GlcNAc...) asparagine glycan. Cysteines 429 and 476 form a disulfide.

Belongs to the glycosyltransferase 2 family. As to quaternary structure, homodimer; disulfide-linked. As to expression, most abundant in brain, liver, lung, spleen and testis.

It is found in the golgi apparatus membrane. The enzyme catalyses a ganglioside GM3 (d18:1(4E)) + UDP-N-acetyl-alpha-D-galactosamine = a ganglioside GM2 (d18:1(4E)) + UDP + H(+). It catalyses the reaction a ganglioside GD3 (d18:1(4E)) + UDP-N-acetyl-alpha-D-galactosamine = a ganglioside GD2 (d18:1(4E)) + UDP + H(+). The catalysed reaction is a ganglioside GM3 + UDP-N-acetyl-alpha-D-galactosamine = a ganglioside GM2 + UDP + H(+). It carries out the reaction a ganglioside GD3 + UDP-N-acetyl-alpha-D-galactosamine = a ganglioside GD2 + UDP + H(+). The enzyme catalyses a ganglioside GD1a + UDP-N-acetyl-alpha-D-galactosamine = a ganglioside GalNAc-GD1a + UDP + H(+). It catalyses the reaction a ganglioside GT3 (d18:1(4E)) + UDP-N-acetyl-alpha-D-galactosamine = a ganglioside GT2 (d18:1(4E)) + UDP + H(+). The catalysed reaction is a beta-D-Gal-(1-&gt;4)-beta-D-Glc-(1&lt;-&gt;1)-Cer(d18:1(4E)) + UDP-N-acetyl-alpha-D-galactosamine = a ganglioside GA2 (d18:1(4E)) + UDP + H(+). It carries out the reaction a neolactoside IV(3)-alpha-NeuGc-nLc4Cer + UDP-N-acetyl-alpha-D-galactosamine = a neolactoside IV(4)-beta-GalNAc-IV(3)-alpha-NeuGc-nLc4Cer + UDP + H(+). It participates in sphingolipid metabolism. In terms of biological role, involved in the biosynthesis of gangliosides GM2, GD2 and GA2. Functionally, involved in the biosynthesis of gangliosides GM2, GD2, GT2 and GA2 from GM3, GD3, GT3 and GA3, respectively. In Mus musculus (Mouse), this protein is Beta-1,4 N-acetylgalactosaminyltransferase 1.